A 432-amino-acid polypeptide reads, in one-letter code: Glycosyltransferase 6 (432 aa).

At 1–18 (MGKPGGAKTRTAVCLSDG) the chain is on the cytoplasmic side. A helical; Signal-anchor for type II membrane protein transmembrane segment spans residues 19–39 (VFFLAGAFMSLTLVWSYFSIF). At 40–432 (SPSFTSLRHD…LPFDYPNEAW (393 aa)) the chain is on the lumenal side. Asn315 is a glycosylation site (N-linked (GlcNAc...) asparagine).

It belongs to the glycosyltransferase 34 family.

The protein resides in the golgi apparatus membrane. Its function is as follows. Probable glycosyltransferase that may be involved in the biosynthesis of xyloglucan. This chain is Glycosyltransferase 6 (GT6), found in Arabidopsis thaliana (Mouse-ear cress).